A 108-amino-acid chain; its full sequence is UPF0060 membrane protein YnfA (108 aa).

The Periplasmic segment spans residues 1-5; sequence MLKTT. Residues 6–26 form a helical membrane-spanning segment; the sequence is LLFFVTALCEIIGCFLTWLWI. Residues 27–30 lie on the Cytoplasmic side of the membrane; the sequence is KRGA. The helical transmembrane segment at 31–51 threads the bilayer; it reads SVWWLLPAAASLALFVWLLTL. Over 52–60 the chain is Periplasmic; it reads HPAASGRVY. The chain crosses the membrane as a helical span at residues 61–81; sequence AAYGGVYVCTALLWLRVVDGV. Topologically, residues 82–84 are cytoplasmic; the sequence is RLT. Residues 85 to 105 traverse the membrane as a helical segment; sequence VYDWCGAPIALCGMLIIVVGW. The Periplasmic segment spans residues 106–108; the sequence is GRT.

Belongs to the UPF0060 family.

The protein resides in the cell inner membrane. This chain is UPF0060 membrane protein YnfA, found in Salmonella dublin (strain CT_02021853).